The sequence spans 5255 residues: Bacitracin synthase 1 (5255 aa).

A domain 1 (isoleucine-activating) region spans residues 39–612 (LHELFEEQAM…IKELSAFIEA (574 aa)). Positions 519 to 531 (VDRKALPEPDRTA) are enriched in basic and acidic residues. The tract at residues 519–542 (VDRKALPEPDRTAGAENEYEAPRN) is disordered. The 76-residue stretch at 539 to 614 (APRNETEEKL…ELSAFIEANH (76 aa)) folds into the Carrier 1 domain. S574 bears the O-(pantetheine 4'-phosphoryl)serine mark. Residues 621 to 1037 (TLVTRAADPE…ITWDYVEQIF (417 aa)) are cyclization. The segment at 1109-1648 (HHDEVMTYQE…FKNDTIIALD (540 aa)) is domain 2 (cysteine-activating). 4 consecutive Carrier domains span residues 1580–1655 (LPEN…KNRE), 2616–2691 (APRD…VRRR), 3659–3733 (PPRN…TEET), and 5166–5241 (APRN…LTAE). O-(pantetheine 4'-phosphoryl)serine is present on residues S1615, S2651, S3694, and S5201. The segment at 2124–2689 (GKAIHQLFEE…IKGLRDISVR (566 aa)) is domain 3 (leucine-activating). The interval 3164 to 3732 (DHPAVAFGDE…KDLSRFITEE (569 aa)) is domain 4 (glutamine-activating). The domain 5 (isoleucine-activating) stretch occupies residues 4668–5249 (LHELFEEQAM…AEAESAVSEE (582 aa)).

Belongs to the ATP-dependent AMP-binding enzyme family. As to quaternary structure, large multienzyme complex of BA1, BA2 and BA3. Requires pantetheine 4'-phosphate as cofactor.

The catalysed reaction is L-glutamate = D-glutamate. It participates in antibiotic biosynthesis; bacitracin biosynthesis. In terms of biological role, activates five amino acids, incorporates two D-amino acids, releases and cyclizes the mature bacitracin. The polypeptide is Bacitracin synthase 1 (bacA) (Bacillus licheniformis).